Reading from the N-terminus, the 356-residue chain is Ribosomal RNA large subunit methyltransferase M (356 aa).

S-adenosyl-L-methionine contacts are provided by residues S187, C220 to G223, D239, D259, and D276. Residue K305 is the Proton acceptor of the active site.

The protein belongs to the class I-like SAM-binding methyltransferase superfamily. RNA methyltransferase RlmE family. RlmM subfamily. As to quaternary structure, monomer.

The protein resides in the cytoplasm. The enzyme catalyses cytidine(2498) in 23S rRNA + S-adenosyl-L-methionine = 2'-O-methylcytidine(2498) in 23S rRNA + S-adenosyl-L-homocysteine + H(+). In terms of biological role, catalyzes the 2'-O-methylation at nucleotide C2498 in 23S rRNA. In Pseudoalteromonas atlantica (strain T6c / ATCC BAA-1087), this protein is Ribosomal RNA large subunit methyltransferase M.